The primary structure comprises 90 residues: Small ribosomal subunit protein uS15c (90 aa).

The protein belongs to the universal ribosomal protein uS15 family. As to quaternary structure, part of the 30S ribosomal subunit.

It is found in the plastid. The protein localises to the chloroplast. The polypeptide is Small ribosomal subunit protein uS15c (rps15-A) (Oryza nivara (Indian wild rice)).